A 374-amino-acid chain; its full sequence is tRNA-specific 2-thiouridylase MnmA (374 aa).

ATP-binding positions include 17-24 (GMSGGVDS) and Met-43. The segment at 103–105 (NPD) is interaction with target base in tRNA. Cys-108 functions as the Nucleophile in the catalytic mechanism. A disulfide bond links Cys-108 and Cys-204. Gly-132 provides a ligand contact to ATP. The interval 154–156 (KDQ) is interaction with tRNA. Residue Cys-204 is the Cysteine persulfide intermediate of the active site. Residues 316 to 317 (RY) are interaction with tRNA.

Belongs to the MnmA/TRMU family.

Its subcellular location is the cytoplasm. It carries out the reaction S-sulfanyl-L-cysteinyl-[protein] + uridine(34) in tRNA + AH2 + ATP = 2-thiouridine(34) in tRNA + L-cysteinyl-[protein] + A + AMP + diphosphate + H(+). Catalyzes the 2-thiolation of uridine at the wobble position (U34) of tRNA, leading to the formation of s(2)U34. This chain is tRNA-specific 2-thiouridylase MnmA, found in Pseudomonas fluorescens (strain SBW25).